We begin with the raw amino-acid sequence, 87 residues long: Small ribosomal subunit protein bS20 (87 aa).

Residues 1-20 form a disordered region; the sequence is MANHKSAEKRARQTIKRTER.

It belongs to the bacterial ribosomal protein bS20 family.

Its function is as follows. Binds directly to 16S ribosomal RNA. In Campylobacter lari (strain RM2100 / D67 / ATCC BAA-1060), this protein is Small ribosomal subunit protein bS20.